The primary structure comprises 310 residues: Methionyl-tRNA formyltransferase (310 aa).

Position 111-114 (111-114) interacts with (6S)-5,6,7,8-tetrahydrofolate; that stretch reads SLLP.

Belongs to the Fmt family.

The catalysed reaction is L-methionyl-tRNA(fMet) + (6R)-10-formyltetrahydrofolate = N-formyl-L-methionyl-tRNA(fMet) + (6S)-5,6,7,8-tetrahydrofolate + H(+). Functionally, attaches a formyl group to the free amino group of methionyl-tRNA(fMet). The formyl group appears to play a dual role in the initiator identity of N-formylmethionyl-tRNA by promoting its recognition by IF2 and preventing the misappropriation of this tRNA by the elongation apparatus. The sequence is that of Methionyl-tRNA formyltransferase from Rhodopseudomonas palustris (strain BisB5).